We begin with the raw amino-acid sequence, 343 residues long: S-adenosylmethionine:tRNA ribosyltransferase-isomerase (343 aa).

This sequence belongs to the QueA family. As to quaternary structure, monomer.

It localises to the cytoplasm. The enzyme catalyses 7-aminomethyl-7-carbaguanosine(34) in tRNA + S-adenosyl-L-methionine = epoxyqueuosine(34) in tRNA + adenine + L-methionine + 2 H(+). Its pathway is tRNA modification; tRNA-queuosine biosynthesis. Transfers and isomerizes the ribose moiety from AdoMet to the 7-aminomethyl group of 7-deazaguanine (preQ1-tRNA) to give epoxyqueuosine (oQ-tRNA). This is S-adenosylmethionine:tRNA ribosyltransferase-isomerase from Coxiella burnetii (strain RSA 331 / Henzerling II).